A 171-amino-acid polypeptide reads, in one-letter code: Small ribosomal subunit protein uS5 (171 aa).

Residues L12–V75 enclose the S5 DRBM domain.

It belongs to the universal ribosomal protein uS5 family. As to quaternary structure, part of the 30S ribosomal subunit. Contacts proteins S4 and S8.

Its function is as follows. With S4 and S12 plays an important role in translational accuracy. Located at the back of the 30S subunit body where it stabilizes the conformation of the head with respect to the body. The protein is Small ribosomal subunit protein uS5 of Buchnera aphidicola subsp. Baizongia pistaciae (strain Bp).